We begin with the raw amino-acid sequence, 993 residues long: UPF0182 protein ROP_64500 (993 aa).

Transmembrane regions (helical) follow at residues 18 to 38 (VLLV…RLIS), 63 to 83 (LLLF…ALLL), 114 to 134 (LFGL…AQSS), 174 to 194 (WLFV…YIFG), 211 to 231 (VQLA…YWFD), 260 to 280 (KLIL…AIFL), and 288 to 308 (MATA…PLVV). Residues 904 to 948 (TGSVATAPSAEEGTPPETGTTPPVEQGAAPPAPTAPATPPSGTDV) are disordered. Positions 908 to 926 (ATAPSAEEGTPPETGTTPP) are enriched in low complexity. Residues 933–942 (PPAPTAPATP) are compositionally biased toward pro residues.

Belongs to the UPF0182 family.

It localises to the cell membrane. The polypeptide is UPF0182 protein ROP_64500 (Rhodococcus opacus (strain B4)).